Reading from the N-terminus, the 804-residue chain is Type 2 DNA topoisomerase 6 subunit B (804 aa).

ATP contacts are provided by residues Asn58, Asp89, 110–111 (SR), 120–127 (GQQGIGIS), and Lys629.

Belongs to the TOP6B family. In terms of assembly, homodimer. Heterotetramer of two Top6A and two Top6B chains.

It carries out the reaction ATP-dependent breakage, passage and rejoining of double-stranded DNA.. Relaxes both positive and negative superturns and exhibits a strong decatenase activity. This is Type 2 DNA topoisomerase 6 subunit B from Halobacterium salinarum (strain ATCC 29341 / DSM 671 / R1).